Consider the following 152-residue polypeptide: Aspartate-rich protein (152 aa).

A signal peptide spans 1–19 (MQKLLLAVLFFSLLAVATA). Residues 82 to 113 (ATPKTEAEPGSLDKGEGTKGEKGKEGKKEKGE) show a composition bias toward basic and acidic residues. The disordered stretch occupies residues 82 to 152 (ATPKTEAEPG…VHENDDENED (71 aa)). Residues 135–152 (DDDDDRDDVHENDDENED) show a composition bias toward acidic residues.

In terms of tissue distribution, prismatic layer of shell (at protein level). Expressed primarily in the mantle with highest level in the mantle edge and lower level in the mantle pallium.

It is found in the secreted. This is Aspartate-rich protein from Margaritifera margaritifera (Freshwater pearl mussel).